The primary structure comprises 276 residues: MTLWEMFTAAVLGIVEGLTEYAPVSSTGHMIIADDIWLKSGSLMNPEAANSFKVVIQLGSILAVAIVFKDRILHLLGLKKNVTRDQQKGYRLTIAQIAVGLVPAAVLGFLFEDFIDRYLFSVRTVAYGLIAGAVLMLIADWINKRKETIDTVDRITYKQAFCVGLFQCLALWPGFSRSGSTIAGGVIVGLNHRAAADFTFIMAIPIMAGASLLKLVKYWSSLSYDMIPFFLVGFICAFVVALLVVKFFLRLINRIKLVPFAIYRVILGIILIMLVR.

Helical transmembrane passes span 48–68, 92–112, 119–139, 155–175, 196–216, 229–249, and 255–275; these read AANSFKVVIQLGSILAVAIVF, LTIAQIAVGLVPAAVLGFLFE, LFSVRTVAYGLIAGAVLMLIA, ITYKQAFCVGLFQCLALWPGF, ADFTFIMAIPIMAGASLLKLV, FFLVGFICAFVVALLVVKFFL, and IKLVPFAIYRVILGIILIMLV.

The protein belongs to the UppP family.

Its subcellular location is the cell membrane. The catalysed reaction is di-trans,octa-cis-undecaprenyl diphosphate + H2O = di-trans,octa-cis-undecaprenyl phosphate + phosphate + H(+). In terms of biological role, catalyzes the dephosphorylation of undecaprenyl diphosphate (UPP). Confers resistance to bacitracin. This Bacillus velezensis (strain DSM 23117 / BGSC 10A6 / LMG 26770 / FZB42) (Bacillus amyloliquefaciens subsp. plantarum) protein is Undecaprenyl-diphosphatase.